The following is a 732-amino-acid chain: Probable boron transporter 3 (732 aa).

Met-1 carries the post-translational modification N-acetylmethionine. The Cytoplasmic portion of the chain corresponds to 1-37 (MDEAESFVPFQGIKKDVKGRLNCYKQDWISGLRAGFR). The helical transmembrane segment at 38–58 (ILAPTTYIFFASAIPVITFGE) threads the bilayer. Residues 59–77 (QLERDTDGKITAVQTLVST) are Extracellular-facing. The helical transmembrane segment at 78 to 98 (ALCGVIHSIIGGQPLLILGVA) threads the bilayer. At 99–123 (EPTVIMYTFMFNFAKSRTDLGSNLF) the chain is on the cytoplasmic side. Residues 124–144 (LAWTGWVCLWTGLLLFLLAVL) traverse the membrane as a helical segment. Residues 145–157 (GACTFINRFTRLA) lie on the Extracellular side of the membrane. A helical membrane pass occupies residues 158 to 178 (GELFGILIAMLFMQEAIRGIV). Residues 179–197 (DEFGVPGRTNPRSAEFQPA) are Cytoplasmic-facing. The chain crosses the membrane as a helical span at residues 198–218 (WVFANGMFGLVLSSGLLYTGL). The Extracellular portion of the chain corresponds to 219–234 (KSRKARSWRFGAEWLR). A helical transmembrane segment spans residues 235 to 255 (GFIADYGVPVMVVVWTCISYI). Topologically, residues 256 to 291 (PWKSVPQGIPRRLVSPNPWSPGAYQNWTVIKEMVDV) are cytoplasmic. A helical transmembrane segment spans residues 292-312 (PVLYILLAVVPASMIAVLYYF). At 313 to 339 (DHSVASQLAQQEDFNLRKPPAYHYDLF) the chain is on the extracellular side. Residues 340-360 (LLGFLTILCGLIGIPPSNGVI) traverse the membrane as a helical segment. Topologically, residues 361–463 (PQSPMHTKSL…ILPVEVKEQR (103 aa)) are cytoplasmic. Residues 464–484 (VSNFLQAMMVAGCVAAMPLIK) traverse the membrane as a helical segment. Topologically, residues 485–556 (RIPSSVLWGY…LFQTAYLLVC (72 aa)) are extracellular. The chain crosses the membrane as a helical span at residues 557–577 (FGITWVPVAGVLFPLMIMFLV). At 578–732 (PVRQYVLPNF…QRLSNLGKSV (155 aa)) the chain is on the cytoplasmic side. The disordered stretch occupies residues 695–732 (GGGEISPRSSAGRAPFSPRSATGGGGGEQRLSNLGKSV).

Belongs to the anion exchanger (TC 2.A.31.3) family.

It is found in the membrane. Probable boron transporter. Boron is essential for maintaining the integrity of plants cell walls. In Arabidopsis thaliana (Mouse-ear cress), this protein is Probable boron transporter 3 (BOR3).